The sequence spans 363 residues: Peptide chain release factor 1 (363 aa).

The residue at position 237 (Gln237) is an N5-methylglutamine. Residues 284–296 (EDEKRRSAEESTR) are compositionally biased toward basic and acidic residues. A disordered region spans residues 284–305 (EDEKRRSAEESTRRSLVASGDR).

This sequence belongs to the prokaryotic/mitochondrial release factor family. In terms of processing, methylated by PrmC. Methylation increases the termination efficiency of RF1.

The protein resides in the cytoplasm. Functionally, peptide chain release factor 1 directs the termination of translation in response to the peptide chain termination codons UAG and UAA. This chain is Peptide chain release factor 1, found in Shewanella baltica (strain OS185).